Consider the following 638-residue polypeptide: 1-deoxy-D-xylulose-5-phosphate synthase (638 aa).

Residues His76 and 117–119 contribute to the thiamine diphosphate site; that span reads AHS. Asp148 contributes to the Mg(2+) binding site. Thiamine diphosphate contacts are provided by residues 149-150, Asn177, Tyr287, and Glu369; that span reads GS. Asn177 is a Mg(2+) binding site.

It belongs to the transketolase family. DXPS subfamily. Homodimer. The cofactor is Mg(2+). Requires thiamine diphosphate as cofactor.

It carries out the reaction D-glyceraldehyde 3-phosphate + pyruvate + H(+) = 1-deoxy-D-xylulose 5-phosphate + CO2. Its pathway is metabolic intermediate biosynthesis; 1-deoxy-D-xylulose 5-phosphate biosynthesis; 1-deoxy-D-xylulose 5-phosphate from D-glyceraldehyde 3-phosphate and pyruvate: step 1/1. Its function is as follows. Catalyzes the acyloin condensation reaction between C atoms 2 and 3 of pyruvate and glyceraldehyde 3-phosphate to yield 1-deoxy-D-xylulose-5-phosphate (DXP). This is 1-deoxy-D-xylulose-5-phosphate synthase from Rhodopseudomonas palustris (strain BisB5).